The following is a 49-amino-acid chain: Large ribosomal subunit protein bL33B (49 aa).

It belongs to the bacterial ribosomal protein bL33 family.

The protein is Large ribosomal subunit protein bL33B of Levilactobacillus brevis (strain ATCC 367 / BCRC 12310 / CIP 105137 / JCM 1170 / LMG 11437 / NCIMB 947 / NCTC 947) (Lactobacillus brevis).